Consider the following 396-residue polypeptide: Elongation factor Tu (396 aa).

Residues 11–205 (KPHVNIGTIG…IVDEYIPTPE (195 aa)) enclose the tr-type G domain. Positions 20–27 (GHVDHGKT) are G1. GTP is bound at residue 20-27 (GHVDHGKT). Threonine 27 is a binding site for Mg(2+). The G2 stretch occupies residues 61–65 (GITIN). Residues 82-85 (DAPG) form a G3 region. GTP-binding positions include 82–86 (DAPGH) and 137–140 (NKCD). A G4 region spans residues 137–140 (NKCD). The G5 stretch occupies residues 175-177 (SAL).

The protein belongs to the TRAFAC class translation factor GTPase superfamily. Classic translation factor GTPase family. EF-Tu/EF-1A subfamily. As to quaternary structure, monomer.

Its subcellular location is the cytoplasm. The enzyme catalyses GTP + H2O = GDP + phosphate + H(+). In terms of biological role, GTP hydrolase that promotes the GTP-dependent binding of aminoacyl-tRNA to the A-site of ribosomes during protein biosynthesis. The protein is Elongation factor Tu of Lactobacillus acidophilus (strain ATCC 700396 / NCK56 / N2 / NCFM).